The following is a 298-amino-acid chain: uncharacterized protein (298 aa).

It to M.tuberculosis Rv1486c, M.bovis Mb1522c and M.avium MAV321.

This is an uncharacterized protein from Mycobacterium leprae (strain TN).